A 335-amino-acid chain; its full sequence is UPF0353 protein MUL_1490 (335 aa).

The next 2 helical transmembrane spans lie at 18 to 38 (WFFLFLLVVAGLIAIYVVLQL) and 67 to 87 (IPAMLLALSLVLFTVAMAGPT). The 201-residue stretch at 98–298 (VVMLVIDVSQ…SVYVSLQQQI (201 aa)) folds into the VWFA domain. Residues 309 to 329 (MGWLRLGALVLVAAALAALLI) form a helical membrane-spanning segment.

This sequence belongs to the UPF0353 family.

It localises to the cell membrane. The sequence is that of UPF0353 protein MUL_1490 from Mycobacterium ulcerans (strain Agy99).